The following is a 28-amino-acid chain: Short cationic peptide-1b (28 aa).

Glutamic acid 1-amide is present on E28.

In terms of tissue distribution, expressed by the venom gland.

It is found in the secreted. This Cupiennius salei (American wandering spider) protein is Short cationic peptide-1b.